The sequence spans 655 residues: Tumor necrosis factor receptor superfamily member 21 (655 aa).

The signal sequence occupies residues 1–41; that stretch reads MGTSASSITALASCSRIAGQVGATMVAGSLLLLGFLSTITA. Residues 42-349 lie on the Extracellular side of the membrane; that stretch reads QPEQKTLSLT…PHKHFDINEH (308 aa). 4 TNFR-Cys repeats span residues 50 to 88, 90 to 131, 133 to 167, and 170 to 211; these read LTGT…LRVC, SCPS…DREC, CPPG…EDVR, and QCAR…DNVC. 9 disulfides stabilise this stretch: Cys-67-Cys-80, Cys-70-Cys-88, Cys-91-Cys-106, Cys-109-Cys-123, Cys-113-Cys-131, Cys-133-Cys-144, Cys-150-Cys-168, Cys-171-Cys-186, and Cys-192-Cys-211. Asn-82 carries an N-linked (GlcNAc...) asparagine glycan. Disordered stretches follow at residues 214–306 and 318–338; these read HLSS…GPHH and EATG…HPRQ. Positions 216-225 are enriched in low complexity; it reads SSSSTTPSSP. Composition is skewed to polar residues over residues 241-262 and 276-302; these read VPSS…TASV and PDNT…THQQ. Residues Asn-252, Asn-278, and Asn-289 are each glycosylated (N-linked (GlcNAc...) asparagine). A helical transmembrane segment spans residues 350–370; it reads LPWMIVLFLLLVLVLIVVCSI. A lipid anchor (S-palmitoyl cysteine) is attached at Cys-368. Residues 371 to 655 lie on the Cytoplasmic side of the membrane; the sequence is RKSSRTLKKG…SVYSHLPDLL (285 aa). The Death domain maps to 415 to 498; the sequence is GIDILKLVAA…DVVEKIRGLM (84 aa).

As to quaternary structure, associates with TRADD. Interacts with NGFR. Interacts with CASP8. Post-translationally, oxidized in response to reactive oxygen species (ROS), leading to endocytosis. As to expression, detected in brain (at protein level). Detected in corpus callosum oligodendrocytes. Detected in embryonic and adult brain.

It is found in the cell membrane. Functionally, promotes apoptosis, possibly via a pathway that involves the activation of NF-kappa-B. Can also promote apoptosis mediated by BAX and by the release of cytochrome c from the mitochondria into the cytoplasm. Trophic-factor deprivation triggers the cleavage of surface APP by beta-secretase to release sAPP-beta which is further cleaved to release an N-terminal fragment of APP (N-APP). Negatively regulates oligodendrocyte survival, maturation and myelination. Plays a role in signaling cascades triggered by stimulation of T-cell receptors, in the adaptive immune response and in the regulation of T-cell differentiation and proliferation. Negatively regulates T-cell responses and the release of cytokines such as IL4, IL5, IL10, IL13 and IFNG by Th2 cells. Negatively regulates the production of IgG, IgM and IgM in response to antigens. May inhibit the activation of JNK in response to T-cell stimulation. Also acts as a regulator of pyroptosis: recruits CASP8 in response to reactive oxygen species (ROS) and subsequent oxidation, leading to activation of GSDMC. The sequence is that of Tumor necrosis factor receptor superfamily member 21 (Tnfrsf21) from Rattus norvegicus (Rat).